The following is an 800-amino-acid chain: Cation/H(+) antiporter 9 (800 aa).

Helical transmembrane passes span 43 to 63 (VIFGYALPLLELQIILIFVCI), 73 to 93 (IGIPRFVSNILAGLILGPQLL), 110 to 130 (NVALEGVARLGLVMFTFLMGV), 145 to 165 (IVIAVSSFFVTMISGLAFRNF), 186 to 206 (VIVSIQAVTLLPVITHLVYEL), 216 to 236 (IAISTAAVSDFLGFLTLVCIS), 247 to 267 (GIANRDIVALIILVLVILFIF), 287 to 306 (VYLYVTILTAIAASIYLSVF), 338 to 358 (LVTNIFFPISIAVMAMKADVV), 371 to 391 (ILLLGLTVVVKWTASFVPCLI), 401 to 421 (VIIATIMNYKGFVDLCFFDVA), and 430 to 450 (ATYTVMIIYVLLNAGILPTII).

It belongs to the monovalent cation:proton antiporter 2 (CPA2) transporter (TC 2.A.37) family. CHX (TC 2.A.37.4) subfamily.

The protein resides in the membrane. Functionally, may operate as a cation/H(+) antiporter. The chain is Cation/H(+) antiporter 9 (CHX9) from Arabidopsis thaliana (Mouse-ear cress).